Consider the following 380-residue polypeptide: SAM and SH3 domain-containing protein 3 (380 aa).

Disordered regions lie at residues 1–76 (MLRR…GKKW) and 96–168 (LSEE…SPAP). Positions 22 to 41 (LQRSSSFKDFAKSKPSSPVV) are enriched in low complexity. A phosphoserine mark is found at S27, S34, and S42. T61 is modified (phosphothreonine). A Phosphoserine modification is found at S97. Residue T103 is modified to Phosphothreonine. Residue S110 is modified to Phosphoserine. At T112 the chain carries Phosphothreonine. Phosphoserine occurs at positions 113 and 120. Positions 141 to 150 (LSRQTSTGSE) are enriched in polar residues. One can recognise an SH3 domain in the interval 173 to 234 (PFCGRARVHT…KFIYVDVLPE (62 aa)). Residues 252-316 (PKPKTLHELL…LTAAELLLDY (65 aa)) form the SAM domain. Phosphothreonine is present on T318. The span at 318–327 (TGSEEAEEGA) shows a compositional bias: acidic residues. Residues 318–380 (TGSEEAEEGA…LQGLSLSGAP (63 aa)) form a disordered region. S320 is modified (phosphoserine). Over residues 369 to 380 (EQLQGLSLSGAP) the composition is skewed to polar residues.

Preferentially expressed in lymphoid tissues. Expressed in bone marrow, thymus, spleen, lymph nodes and Peyer patches of gut. In the spleen and lymph nodes, expressed in both T- and B-cells. In the thymus, in the medulla and cortex.

Functionally, may function as a signaling adapter protein in lymphocytes. The protein is SAM and SH3 domain-containing protein 3 (Sash3) of Mus musculus (Mouse).